A 323-amino-acid chain; its full sequence is UDP-galactose/UDP-glucose transporter 7 (323 aa).

At 1 to 10 (MEVQAEMEPT) the chain is on the cytoplasmic side. A helical transmembrane segment spans residues 11 to 31 (SSISLVAAVSYGIASMAMVFI). Topologically, residues 32–35 (NKAV) are lumenal. A helical transmembrane segment spans residues 36–58 (IMQYPHSMTVLTLQQLATSLLIH). Residues 59–78 (FGRRMGYTRAKGIDMATAKK) are Cytoplasmic-facing. Residues 79–97 (LLPVSIFYNANVAFALASL) form a helical membrane-spanning segment. Residues 98-101 (KGVN) lie on the Lumenal side of the membrane. The chain crosses the membrane as a helical span at residues 102-124 (IPMYIAIKRLTPLAVLISGVLFG). The Cytoplasmic portion of the chain corresponds to 125 to 132 (KGKPTTQV). Residues 133-153 (ALSVLLTAAGCVIAALGDFSF) form a helical membrane-spanning segment. Position 154 (D154) is a topological domain, lumenal. A helical membrane pass occupies residues 155–175 (LFGYGLALTSVFFQTMYLVLV). Topologically, residues 176–186 (EKSGAEDGLSS) are cytoplasmic. A helical membrane pass occupies residues 187–207 (IEIMFYNSFLSLPFLSILIIV). Residues 208–226 (TGEFPNSLSLLLAKCSYLP) lie on the Lumenal side of the membrane. Residues 227–247 (FLVILILSLVMGIVLNFTMFL) traverse the membrane as a helical segment. Over 248–252 (CTIVN) the chain is Cytoplasmic. A helical membrane pass occupies residues 253 to 275 (SALTTTIVGVLKGVGSTTLGFVL). The Lumenal portion of the chain corresponds to 276–278 (LGG). The helical transmembrane segment at 279–301 (VEVHALNVSGLVVNTAGGVWYSY) threads the bilayer. At 302–323 (AKYRQKKAKPAKLMSDLEAHKK) the chain is on the cytoplasmic side.

It belongs to the TPT transporter family. UGnT (TC 2.A.7.15) subfamily. Widely expressed with highest expression in roots.

Its subcellular location is the golgi apparatus membrane. Nucleotide-sugar transporter that transports UDP-glucose and UDP-galactose. Plays a role in lateral root and root hair development. The polypeptide is UDP-galactose/UDP-glucose transporter 7 (Arabidopsis thaliana (Mouse-ear cress)).